Reading from the N-terminus, the 213-residue chain is Pyrrolidone-carboxylate peptidase (213 aa).

Catalysis depends on residues E78, C141, and H165.

This sequence belongs to the peptidase C15 family. Homotetramer.

The protein resides in the cytoplasm. The enzyme catalyses Release of an N-terminal pyroglutamyl group from a polypeptide, the second amino acid generally not being Pro.. Removes 5-oxoproline from various penultimate amino acid residues except L-proline. The chain is Pyrrolidone-carboxylate peptidase from Enterococcus faecalis (strain ATCC 700802 / V583).